A 154-amino-acid chain; its full sequence is Myoglobin (154 aa).

The region spanning 2–148 is the Globin domain; the sequence is GLSDGEWQLV…FRNDMAAQYK (147 aa). Ser-4 carries the phosphoserine modification. His-65 contributes to the nitrite binding site. His-65 is an O2 binding site. Thr-68 bears the Phosphothreonine mark. Heme b is bound at residue His-94.

Belongs to the globin family. In terms of assembly, monomeric.

It localises to the cytoplasm. The protein resides in the sarcoplasm. It carries out the reaction Fe(III)-heme b-[protein] + nitric oxide + H2O = Fe(II)-heme b-[protein] + nitrite + 2 H(+). The catalysed reaction is H2O2 + AH2 = A + 2 H2O. Functionally, monomeric heme protein which primary function is to store oxygen and facilitate its diffusion within muscle tissues. Reversibly binds oxygen through a pentacoordinated heme iron and enables its timely and efficient release as needed during periods of heightened demand. Depending on the oxidative conditions of tissues and cells, and in addition to its ability to bind oxygen, it also has a nitrite reductase activity whereby it regulates the production of bioactive nitric oxide. Under stress conditions, like hypoxia and anoxia, it also protects cells against reactive oxygen species thanks to its pseudoperoxidase activity. This is Myoglobin (MB) from Cervus elaphus (Red deer).